Consider the following 212-residue polypeptide: METHMAKPKAPAGIENPVQLAVIGAAHGIKGEVRVKTFTEDPMALGSYGPLHMVDGRVLQVAAIRPAKEVVIVRFKGVDGRNAAEALNGEALFVDRSALPEKLEEEEFYYADLIGMAVLDEKGENLGRVVAVHNFGAGDLLEFRENSGPTVIIPFTRDAVPDIDLSNNTIRIDSITAGLDNAELSGEEDEAEGPESARGSRPRGPKSAGEPR.

The region spanning 105 to 181 is the PRC barrel domain; it reads EEEFYYADLI…IDSITAGLDN (77 aa). The interval 181 to 212 is disordered; that stretch reads NAELSGEEDEAEGPESARGSRPRGPKSAGEPR.

Belongs to the RimM family. As to quaternary structure, binds ribosomal protein uS19.

The protein localises to the cytoplasm. An accessory protein needed during the final step in the assembly of 30S ribosomal subunit, possibly for assembly of the head region. Essential for efficient processing of 16S rRNA. May be needed both before and after RbfA during the maturation of 16S rRNA. It has affinity for free ribosomal 30S subunits but not for 70S ribosomes. This is Ribosome maturation factor RimM from Chelativorans sp. (strain BNC1).